The following is a 180-amino-acid chain: ATP-dependent protease subunit HslV (180 aa).

Threonine 6 is a catalytic residue. Positions 164, 167, and 170 each coordinate Na(+).

This sequence belongs to the peptidase T1B family. HslV subfamily. In terms of assembly, a double ring-shaped homohexamer of HslV is capped on each side by a ring-shaped HslU homohexamer. The assembly of the HslU/HslV complex is dependent on binding of ATP.

It localises to the cytoplasm. The enzyme catalyses ATP-dependent cleavage of peptide bonds with broad specificity.. With respect to regulation, allosterically activated by HslU binding. Its function is as follows. Protease subunit of a proteasome-like degradation complex believed to be a general protein degrading machinery. This is ATP-dependent protease subunit HslV from Borrelia duttonii (strain Ly).